The following is a 200-amino-acid chain: Small heat shock protein hspG2 (200 aa).

Residues 33–200 form the sHSP domain; that stretch reads NKRIDIIPSM…DNFQIKLKSI (168 aa). The interval 86–139 is disordered; that stretch reads KLQQQQQQQSEKSSQSTNNKDDDEPSIEEYEDDTKLKSNLNKNTENKDENKTTS. The segment covering 88–101 has biased composition (low complexity); the sequence is QQQQQQQSEKSSQS. Residues 106–117 are compositionally biased toward acidic residues; that stretch reads DDDEPSIEEYED.

It belongs to the small heat shock protein (HSP20) family.

The polypeptide is Small heat shock protein hspG2 (hspG2) (Dictyostelium discoideum (Social amoeba)).